The sequence spans 290 residues: Expansin-A26 (290 aa).

An N-terminal signal peptide occupies residues 1 to 29 (MDTTTTMAPLPLLTTTSLLLFFFLASSFA). Residues 45 to 67 (DGGGDGEGGGGGDGEGGGGGGGA) are disordered. Positions 101-196 (GGACGYKDAD…RKVACVRQGG (96 aa)) constitute an Expansin-like EG45 domain. The 81-residue stretch at 206–286 (SYNMVMVKNV…DWTYDNTYQA (81 aa)) folds into the Expansin-like CBD domain. N-linked (GlcNAc...) asparagine glycosylation is present at asparagine 250.

Belongs to the expansin family. Expansin A subfamily. In terms of tissue distribution, expressed in flowers.

It localises to the secreted. Its subcellular location is the cell wall. The protein localises to the membrane. Functionally, may cause loosening and extension of plant cell walls by disrupting non-covalent bonding between cellulose microfibrils and matrix glucans. No enzymatic activity has been found. May be required for rapid internodal elongation in deepwater rice during submergence. The protein is Expansin-A26 (EXPA26) of Oryza sativa subsp. japonica (Rice).